A 141-amino-acid polypeptide reads, in one-letter code: MLTAEDKKLIQQAWEKASSHQEDFGAEALLRMFTAYPQTKTYFPHFDLSPGSDQIRGHGKKVLAALGNAVKNIDDLSQAMAELSNLHAFNLRVDPVNFKLLSQCIQVVLAAHMGKDYSPEVHAAFDKFLSAVAAVLAGKYR.

One can recognise a Globin domain in the interval 1–141; the sequence is MLTAEDKKLI…VAAVLAGKYR (141 aa). Residues histidine 58 and histidine 87 each contribute to the heme b site.

It belongs to the globin family. As to quaternary structure, heterotetramer of two alpha-D chains and two beta chains. In terms of tissue distribution, red blood cells.

Involved in oxygen transport from the lung to the various peripheral tissues. The sequence is that of Hemoglobin subunit alpha-D (HBAD) from Coturnix japonica (Japanese quail).